Reading from the N-terminus, the 1280-residue chain is SET and MYND domain-containing protein DDB_G0284059 (1280 aa).

2 disordered regions span residues 1 to 35 (MTKK…SHNH) and 111 to 167 (INKI…QKQQ). Low complexity-rich tracts occupy residues 16 to 25 (NNNNNNNHGN) and 117 to 153 (ENSP…QSQP). TPR repeat units lie at residues 272–305 (SKGY…YDME) and 383–416 (HKLY…IEKR). The stretch at 439–468 (QKDEEIEQELDNKNNNSNDDEKQQQQQQQQ) forms a coiled coil. Zn(2+) contacts are provided by C533, C536, C546, C549, C555, C559, H568, and C572. The MYND-type zinc finger occupies 533–572 (CYNCFKEILSPIYCKECSNSQYCSNKCLNEDYVKQHGREC). 4 disordered regions span residues 601–642 (ANKG…QNLN), 659–726 (ALSS…TTTT), 854–905 (QQQQ…PFSP), and 1039–1079 (AKLQ…LNNN). Low complexity-rich tracts occupy residues 659–697 (ALSS…SLTE), 712–726 (SSSS…TTTT), 854–898 (QQQQ…QNPP), 1042–1053 (QQQQQQQQQHQQ), and 1061–1079 (NSNP…LNNN). Residues 822–965 (CQLTTYTFAI…KGEEILGCYG (144 aa)) enclose the SET domain. One copy of the TPR 3 repeat lies at 1218-1251 (GREYSKLGQIYLTLGEIEKSEDAIEKAESILMSW).

This sequence belongs to the class V-like SAM-binding methyltransferase superfamily.

In terms of biological role, probable methyltransferase. The polypeptide is SET and MYND domain-containing protein DDB_G0284059 (Dictyostelium discoideum (Social amoeba)).